The primary structure comprises 120 residues: rRNA-processing protein CGR1 (120 aa).

Disordered regions lie at residues 1–26 (MVNE…KAEK) and 81–120 (ERRE…LKER). Positions 47 to 106 (KKQKRLEDKQFKERLKALKDEKEEARQAKITMLKERREKKEENERYERLAAKMHAKKVER) form a coiled coil. The span at 81-96 (ERREKKEENERYERLA) shows a compositional bias: basic and acidic residues. Positions 97-113 (AKMHAKKVERMRRREKR) are enriched in basic residues.

This sequence belongs to the CGR1 family.

It is found in the nucleus. Its subcellular location is the nucleolus. Involved in nucleolar integrity and required for processing of the pre-rRNA for the 60S ribosome subunit. This chain is rRNA-processing protein CGR1 (CGR1), found in Saccharomyces cerevisiae (strain ATCC 204508 / S288c) (Baker's yeast).